Reading from the N-terminus, the 509-residue chain is MAAAAGMMLLGLLQAGGSVLGQAMEKVTGGNLLSMLLIACAFTLSLVYLFRLAAGHLVQLPAGAKSPPYIFSPIPFLGHAIAFGKSPVEFLENAYEKYGPVFSFTMVGKTFTYLLGSDAAALLFNSKNEDLNAEDVYSRLTTPVFGKGVAYDVPNPVFLEQKKMLKSGLNIAHFKQHVSIIEKETKEYFQSWGESGEKNVFEALSELIILTASHCLHGKEIRSQLNEKVAQLYADLDGGFSHAAWLLPGWLPLPSFRRRDRAHREIKNIFYKAIQKRRQSQEKIDDILQTLLDATYKDGRPLTDDEVAGMLIGLLLAGQHTSSTTSAWMGFFLARDKTLQEKCYLEQKTVCGENLPPLTYDQLKDLNLLDRCIKETLRLRPPIMIMMRMARTPQTVAGYTIPPGHQVCVSPTVNQRLKDSWVERLDFNPDRYLQDNPASGEKFAYVPFGAGRHRCIGENFAYVQIKTIWSTMLRLYEFDLIDGYFPTVNYTTMIHTPENPVIRYKRRSK.

The helical transmembrane segment at 30-50 (GNLLSMLLIACAFTLSLVYLF) threads the bilayer. C455 contributes to the heme binding site.

The protein belongs to the cytochrome P450 family. The cofactor is heme. In terms of processing, ubiquitinated by MARCHF6, leading to proteasomal degradation.

The protein resides in the endoplasmic reticulum membrane. The protein localises to the microsome membrane. It carries out the reaction a 14alpha-methyl steroid + 3 reduced [NADPH--hemoprotein reductase] + 3 O2 = a Delta(14) steroid + formate + 3 oxidized [NADPH--hemoprotein reductase] + 4 H2O + 4 H(+). It catalyses the reaction lanosterol + 3 reduced [NADPH--hemoprotein reductase] + 3 O2 = 4,4-dimethyl-5alpha-cholesta-8,14,24-trien-3beta-ol + formate + 3 oxidized [NADPH--hemoprotein reductase] + 4 H2O + 4 H(+). The catalysed reaction is 24,25-dihydrolanosterol + 3 reduced [NADPH--hemoprotein reductase] + 3 O2 = 4,4-dimethyl-8,14-cholestadien-3beta-ol + formate + 3 oxidized [NADPH--hemoprotein reductase] + 4 H2O + 4 H(+). The enzyme catalyses a 14alpha-methyl steroid + reduced [NADPH--hemoprotein reductase] + O2 = a 14alpha-hydroxymethyl steroid + oxidized [NADPH--hemoprotein reductase] + H2O + H(+). It carries out the reaction a 14alpha-hydroxymethyl steroid + reduced [NADPH--hemoprotein reductase] + O2 = a 14alpha-formyl steroid + oxidized [NADPH--hemoprotein reductase] + 2 H2O + H(+). It catalyses the reaction a 14alpha-formyl steroid + reduced [NADPH--hemoprotein reductase] + O2 = a Delta(14) steroid + formate + oxidized [NADPH--hemoprotein reductase] + H2O + 2 H(+). The catalysed reaction is lanosterol + reduced [NADPH--hemoprotein reductase] + O2 = 32-hydroxylanosterol + oxidized [NADPH--hemoprotein reductase] + H2O + H(+). The enzyme catalyses 32-hydroxylanosterol + reduced [NADPH--hemoprotein reductase] + O2 = 32-oxolanosterol + oxidized [NADPH--hemoprotein reductase] + 2 H2O + H(+). It carries out the reaction 32-oxolanosterol + reduced [NADPH--hemoprotein reductase] + O2 = 4,4-dimethyl-5alpha-cholesta-8,14,24-trien-3beta-ol + formate + oxidized [NADPH--hemoprotein reductase] + H2O + 2 H(+). It catalyses the reaction 24,25-dihydrolanosterol + reduced [NADPH--hemoprotein reductase] + O2 = 32-hydroxy-24,25-dihydrolanosterol + oxidized [NADPH--hemoprotein reductase] + H2O + H(+). The catalysed reaction is 32-hydroxy-24,25-dihydrolanosterol + reduced [NADPH--hemoprotein reductase] + O2 = 32-oxo-24,25-dihydrolanosterol + oxidized [NADPH--hemoprotein reductase] + 2 H2O + H(+). The enzyme catalyses 32-oxo-24,25-dihydrolanosterol + reduced [NADPH--hemoprotein reductase] + O2 = 4,4-dimethyl-8,14-cholestadien-3beta-ol + formate + oxidized [NADPH--hemoprotein reductase] + H2O + 2 H(+). The protein operates within steroid biosynthesis; zymosterol biosynthesis; zymosterol from lanosterol: step 1/6. With respect to regulation, inhibited by azalanstat. Inhibited by azole antifungal agents ketoconazole, itraconazole and fluconazole. Sterol 14alpha-demethylase that plays a critical role in the cholesterol biosynthesis pathway, being cholesterol the major sterol component in mammalian membranes as well as a precursor for bile acid and steroid hormone synthesis. Cytochrome P450 monooxygenase that catalyzes the three-step oxidative removal of the 14alpha-methyl group (C-32) of sterols such as lanosterol (lanosta-8,24-dien-3beta-ol) and 24,25-dihydrolanosterol (DHL) in the form of formate, and converts the sterols to 4,4-dimethyl-5alpha-cholesta-8,14,24-trien-3beta-ol and 4,4-dimethyl-8,14-cholestadien-3beta-ol, respectively, which are intermediates of cholesterol biosynthesis. Can also demethylate substrates not intrinsic to mammals, such as eburicol (24-methylene-24,25-dihydrolanosterol), but at a lower rate than DHL. In Macaca fascicularis (Crab-eating macaque), this protein is Lanosterol 14-alpha demethylase.